The primary structure comprises 370 residues: DNA replication and repair protein RecF (370 aa).

G30 to T37 lines the ATP pocket.

This sequence belongs to the RecF family.

The protein resides in the cytoplasm. Functionally, the RecF protein is involved in DNA metabolism; it is required for DNA replication and normal SOS inducibility. RecF binds preferentially to single-stranded, linear DNA. It also seems to bind ATP. The chain is DNA replication and repair protein RecF from Staphylococcus aureus (strain USA300).